The following is a 262-amino-acid chain: Acetaldehyde dehydrogenase 7 (262 aa).

Residue 10–13 (SGNI) participates in NAD(+) binding. Residue C128 is the Acyl-thioester intermediate of the active site. Residue 159–167 (SAGPGTRAN) participates in NAD(+) binding.

Belongs to the acetaldehyde dehydrogenase family.

It catalyses the reaction acetaldehyde + NAD(+) + CoA = acetyl-CoA + NADH + H(+). The sequence is that of Acetaldehyde dehydrogenase 7 from Rhodococcus jostii (strain RHA1).